We begin with the raw amino-acid sequence, 66 residues long: Large ribosomal subunit protein bL31 (66 aa).

Zn(2+) is bound by residues C16, C18, C36, and C39.

The protein belongs to the bacterial ribosomal protein bL31 family. Type A subfamily. As to quaternary structure, part of the 50S ribosomal subunit. Requires Zn(2+) as cofactor.

Functionally, binds the 23S rRNA. This Campylobacter lari (strain RM2100 / D67 / ATCC BAA-1060) protein is Large ribosomal subunit protein bL31.